A 222-amino-acid polypeptide reads, in one-letter code: Glutathione S-transferase alpha M14 (222 aa).

Residue Met1 is modified to N-acetylmethionine. Residue Ala2 is modified to N-acetylalanine; in Glutathione S-transferase alpha M14, N-terminally processed. In terms of domain architecture, GST N-terminal spans 3–83 (GKPILHYFNG…YIATKYNLYG (81 aa)). Lys4 carries the N6-succinyllysine modification. Residues Tyr9, 54–55 (QV), and 67–68 (QT) each bind glutathione. In terms of domain architecture, GST C-terminal spans 85 to 208 (DAKERALIDM…QPGSQRKPPM (124 aa)). The disordered stretch occupies residues 199–222 (QPGSQRKPPMDAKKIRRSQEYFPD). Residues 206 to 222 (PPMDAKKIRRSQEYFPD) show a composition bias toward basic and acidic residues.

The protein belongs to the GST superfamily. Alpha family. In terms of assembly, homodimer or heterodimer of GSTA1 and GSTA2.

The protein localises to the cytoplasm. The catalysed reaction is RX + glutathione = an S-substituted glutathione + a halide anion + H(+). It carries out the reaction prostaglandin A2 + glutathione = prostaglandin A2-S-(R)-glutathione. The enzyme catalyses prostaglandin J2 + glutathione = prostaglandin J2-S-(R)-glutathione. It catalyses the reaction (13S)-hydroperoxy-(9Z,11E)-octadecadienoate + 2 glutathione = (13S)-hydroxy-(9Z,11E)-octadecadienoate + glutathione disulfide + H2O. The catalysed reaction is androst-5-ene-3,17-dione = androst-4-ene-3,17-dione. Its function is as follows. Glutathione S-transferase that catalyzes the nucleophilic attack of the sulfur atom of glutathione on the electrophilic groups of a wide range of exogenous and endogenous compounds. Involved in the formation of glutathione conjugates of both prostaglandin A2 (PGA2) and prostaglandin J2 (PGJ2). It also catalyzes the isomerization of D5-androstene-3,17-dione (AD) into D4-androstene-3,17-dione and may therefore play an important role in hormone biosynthesis. Through its glutathione-dependent peroxidase activity toward the fatty acid hydroperoxide (13S)-hydroperoxy-(9Z,11E)-octadecadienoate/13-HPODE it is also involved in the metabolism of oxidized linoleic acid. This chain is Glutathione S-transferase alpha M14, found in Sus scrofa (Pig).